Reading from the N-terminus, the 130-residue chain is Small ribosomal subunit protein uS11c (130 aa).

This sequence belongs to the universal ribosomal protein uS11 family. As to quaternary structure, part of the 30S ribosomal subunit.

Its subcellular location is the plastid. It localises to the chloroplast. This chain is Small ribosomal subunit protein uS11c, found in Physcomitrium patens (Spreading-leaved earth moss).